Here is a 193-residue protein sequence, read N- to C-terminus: ATP synthase subunit b 1 (193 aa).

The segment at 9 to 28 (QEADHTAGETHTETGVAEGG) is disordered. Over residues 10 to 20 (EADHTAGETHT) the composition is skewed to basic and acidic residues. A helical membrane pass occupies residues 40-59 (TYPSQLLWLAITFGLFYLFL).

The protein belongs to the ATPase B chain family. As to quaternary structure, F-type ATPases have 2 components, F(1) - the catalytic core - and F(0) - the membrane proton channel. F(1) has five subunits: alpha(3), beta(3), gamma(1), delta(1), epsilon(1). F(0) has three main subunits: a(1), b(2) and c(10-14). The alpha and beta chains form an alternating ring which encloses part of the gamma chain. F(1) is attached to F(0) by a central stalk formed by the gamma and epsilon chains, while a peripheral stalk is formed by the delta and b chains.

It is found in the cell inner membrane. Its function is as follows. F(1)F(0) ATP synthase produces ATP from ADP in the presence of a proton or sodium gradient. F-type ATPases consist of two structural domains, F(1) containing the extramembraneous catalytic core and F(0) containing the membrane proton channel, linked together by a central stalk and a peripheral stalk. During catalysis, ATP synthesis in the catalytic domain of F(1) is coupled via a rotary mechanism of the central stalk subunits to proton translocation. Functionally, component of the F(0) channel, it forms part of the peripheral stalk, linking F(1) to F(0). This Chelativorans sp. (strain BNC1) protein is ATP synthase subunit b 1.